Consider the following 302-residue polypeptide: B3 domain-containing protein At3g17010 (302 aa).

Positions 21-116 form a DNA-binding region, TF-B3 1; the sequence is FFKIFQRADL…VFHVNIYEQN (96 aa). The disordered stretch occupies residues 123–192; it reads PRKFQTMGPS…KVKKKSKSKS (70 aa). Residues 135-174 are compositionally biased toward basic and acidic residues; the sequence is IKKEEGENSLIDVKKEEESDESPGRAEFLVRKKKTEDSKS. A compositionally biased stretch (basic residues) spans 175-192; that stretch reads SKKKMTRNKVKKKSKSKS. The segment at residues 199-292 is a DNA-binding region (TF-B3 2); sequence VPEFKITIRK…EFVLLTSKKN (94 aa).

The protein localises to the nucleus. The protein is B3 domain-containing protein At3g17010 of Arabidopsis thaliana (Mouse-ear cress).